Reading from the N-terminus, the 62-residue chain is uncharacterized protein (62 aa).

The disordered stretch occupies residues 38–62 (VKSESDTADSKRSAEAKADEAPAKM).

This is an uncharacterized protein from Schizosaccharomyces pombe (strain 972 / ATCC 24843) (Fission yeast).